The chain runs to 186 residues: dCTP deaminase (186 aa).

107 to 112 (KSTYAR) contributes to the dCTP binding site. Residue Glu-133 is the Proton donor/acceptor of the active site. Positions 152, 166, and 176 each coordinate dCTP.

The protein belongs to the dCTP deaminase family. As to quaternary structure, homotrimer.

The catalysed reaction is dCTP + H2O + H(+) = dUTP + NH4(+). Its pathway is pyrimidine metabolism; dUMP biosynthesis; dUMP from dCTP (dUTP route): step 1/2. Catalyzes the deamination of dCTP to dUTP. The polypeptide is dCTP deaminase (Campylobacter fetus subsp. fetus (strain 82-40)).